A 342-amino-acid chain; its full sequence is Methionine import ATP-binding protein MetN (342 aa).

One can recognise an ABC transporter domain in the interval 2–241 (ITLEQVTKIY…PQQPITKRFV (240 aa)). An ATP-binding site is contributed by 38 to 45 (GYSGAGKS).

Belongs to the ABC transporter superfamily. Methionine importer (TC 3.A.1.24) family. As to quaternary structure, the complex is composed of two ATP-binding proteins (MetN), two transmembrane proteins (MetI) and a solute-binding protein (MetQ).

The protein localises to the cell membrane. The catalysed reaction is L-methionine(out) + ATP + H2O = L-methionine(in) + ADP + phosphate + H(+). It catalyses the reaction D-methionine(out) + ATP + H2O = D-methionine(in) + ADP + phosphate + H(+). Functionally, part of the ABC transporter complex MetNIQ involved in methionine import. Responsible for energy coupling to the transport system. The protein is Methionine import ATP-binding protein MetN of Geobacillus kaustophilus (strain HTA426).